We begin with the raw amino-acid sequence, 513 residues long: Putative ribose/galactose/methyl galactoside import ATP-binding protein (513 aa).

2 consecutive ABC transporter domains span residues 24 to 260 (LSAE…VGRE) and 270 to 510 (VPIG…VMEL). ATP is bound at residue 56-63 (GENGAGKS).

Belongs to the ABC transporter superfamily. Carbohydrate importer 2 (CUT2) (TC 3.A.1.2) family.

It localises to the cell inner membrane. It carries out the reaction D-ribose(out) + ATP + H2O = D-ribose(in) + ADP + phosphate + H(+). The catalysed reaction is D-galactose(out) + ATP + H2O = D-galactose(in) + ADP + phosphate + H(+). Functionally, part of an ABC transporter complex involved in carbohydrate import. Could be involved in ribose, galactose and/or methyl galactoside import. Responsible for energy coupling to the transport system. The polypeptide is Putative ribose/galactose/methyl galactoside import ATP-binding protein (Rhizobium johnstonii (strain DSM 114642 / LMG 32736 / 3841) (Rhizobium leguminosarum bv. viciae)).